The primary structure comprises 435 residues: MRGTRVTETASAPRMAPGPPTLDDPWPVALLASKIRGWIERLGTAWVEGEITQWGVSGGNVYGKLKDLNEDATVGFTIWSSVKARIPADLKQGDRVIAAVKPNYWLKGGTLTMQVSDMRHVGLGDLLERLERLRAQLRAEGLFRPERKKRLPFLPHTIGLVTGKDSDAEKDVLRNAQLRWPQVRFRTVYAAVQGDRTVPEVTAALRELDADPEVEVIIVARGGGDFQNLLGFSDESLLRAAAGLSTPLVSAIGHEADRPLLDEVADLRASTPTDAAKRVVPDVAEELVRVHQARARIGTRLTHIIRHEIDRIGHLRTRPALASGSWIVDSRAQDLTRFVARGAELVERCVDREAARVAELRGQLRALSPQATLERGYAIVQNAAGRVVAAPGEAPAGTELRITVSGGSLAATAGKALPSPAQGATNGSLAAPRGK.

A compositionally biased stretch (polar residues) spans 1 to 10 (MRGTRVTETA). Disordered regions lie at residues 1–21 (MRGT…GPPT) and 413–435 (AGKA…PRGK).

The protein belongs to the XseA family. As to quaternary structure, heterooligomer composed of large and small subunits.

It localises to the cytoplasm. It catalyses the reaction Exonucleolytic cleavage in either 5'- to 3'- or 3'- to 5'-direction to yield nucleoside 5'-phosphates.. Bidirectionally degrades single-stranded DNA into large acid-insoluble oligonucleotides, which are then degraded further into small acid-soluble oligonucleotides. The sequence is that of Exodeoxyribonuclease 7 large subunit from Leifsonia xyli subsp. xyli (strain CTCB07).